The sequence spans 430 residues: Mothers against decapentaplegic homolog 9 (430 aa).

The 125-residue stretch at 16–140 (PAVKRLLGWK…YRRVETPVLP (125 aa)) folds into the MH1 domain. 4 residues coordinate Zn(2+): cysteine 68, cysteine 113, cysteine 125, and histidine 130. The tract at residues 186-222 (CPAPPSSPGHVFPQSPCPTSYPHSPGSPSESDSPYQH) is disordered. The segment covering 202–221 (CPTSYPHSPGSPSESDSPYQ) has biased composition (polar residues). Residues 236–430 (WCSVAYYELN…SPHNPISSVS (195 aa)) enclose the MH2 domain.

It belongs to the dwarfin/SMAD family. Interaction with the co-SMAD SMAD4. Interacts with PEBP2-alpha subunit. Interacts with RANBP3L. Phosphorylated on serine by BMP (bone morphogenetic proteins) type 1 receptor kinase and activin type I receptor-like kinases (ALK-2, ALK-3 and ALK-6).

The protein localises to the cytoplasm. It is found in the nucleus. Functionally, transcriptional modulator activated by BMP (bone morphogenetic proteins) type 1 receptor kinase. SMAD9 is a receptor-regulated SMAD (R-SMAD). Has been shown to be activated by activin type I receptor-like kinases (ALK-2, ALK-3, ALK-6) which stimulate heteromerization between SMAD9 and SMAD4. May play a role in osteoblast differentiation and maturation. This Mus musculus (Mouse) protein is Mothers against decapentaplegic homolog 9 (Smad9).